We begin with the raw amino-acid sequence, 881 residues long: MAGAAPRVRYLAGFCCPLGGLAAGKPRVLCHEAEVFLSTGSELVYVYDQEGGLLTAAFRFPDQVWHLELLAPRRLLYALCARRGLYCLSLDHPGRSRSTSQDDRDSEDGDQPSPVIPVDPDACILPDAALCAFTLLDSVLVTLVQGPARWKMQLFEQPCPGEDPRPGGQIGEVELSSYTPPAGVPGKPAAPHFLPVLCSVSPSGSRVPHDLLGGSGGFTLEDALFGLLFGADATLLQSPVVLCGLPDGQLCCVILKALVTSRSAPGDPNALVKILHHLEEPVIFIGALKTEPQAAEAAENFLPDEDVHCDCLVAFGHHGRMLAIKASWDESGKLVPELREYCLPGPVLCAACGGGGRVYHSTPSDLCVVDLSRGSTPLGPEQPEEGPGGLPPMLCPASLNICSVVSLSASPRTHEGGTKLLALSAKGRLMTCSLDLDSEMPGPARMTTESAGQKIKELLSGIGNISERVSFLKKAVDQRNKALTSLNEAMNVSCALLSSGTGPRPISCTTSTTWSRLQTQDVLMATCVLENSSSFSLDQGWTLCIQVLTSSCALDLDSACSAITYTIPVDQLGPGARREVTLPLGPGENGGLDLPVTVSCTLFYSLREVVGGALAPSDSEDPFLDECPSDVLPEQEGVCLPLSRHTVDMLQCLRFPGLAPPHTRAPSPLGPTRDPVATFLETCREPGSQPAGPASLRAEYLPPSVASIKVSAELLRAALKDGHSGVPLCCATLQWLLAENAAVDVVRARALSSIQGVAPDGANVHLIVREVAMTDLCPAGPIQAVEIQVESSSLADICRAHHAVVGRMQTMVTEQATQGSSAPDLRVQYLRQIHANHETLLREVQTLRDRLCTEDEASSCATAQRLLQVYRQLRHPSLILL.

Residues 94 to 119 (GRSRSTSQDDRDSEDGDQPSPVIPVD) form a disordered region. Position 667 is a phosphoserine (Ser-667).

As to quaternary structure, belongs to the multisubunit FA complex composed of FANCA, FANCB, FANCC, FANCE, FANCF, FANCG, FANCL/PHF9, FANCM, FAAP24 and FAAP100. Forms a subcomplex with FANCB and FANCL.

It is found in the nucleus. Its function is as follows. Plays a role in Fanconi anemia-associated DNA damage response network. Regulates FANCD2 monoubiquitination and the stability of the FA core complex. Induces chromosomal instability as well as hypersensitivity to DNA cross-linking agents, when repressed. This Homo sapiens (Human) protein is Fanconi anemia core complex-associated protein 100.